The primary structure comprises 159 residues: Ribosomal RNA large subunit methyltransferase H (159 aa).

Residues Leu-76, Gly-108, and 127-132 (FSKMTF) each bind S-adenosyl-L-methionine.

The protein belongs to the RNA methyltransferase RlmH family. As to quaternary structure, homodimer.

The protein resides in the cytoplasm. It carries out the reaction pseudouridine(1915) in 23S rRNA + S-adenosyl-L-methionine = N(3)-methylpseudouridine(1915) in 23S rRNA + S-adenosyl-L-homocysteine + H(+). Its function is as follows. Specifically methylates the pseudouridine at position 1915 (m3Psi1915) in 23S rRNA. This chain is Ribosomal RNA large subunit methyltransferase H, found in Clostridium tetani (strain Massachusetts / E88).